Consider the following 400-residue polypeptide: Transmembrane protein 43 (400 aa).

A2 carries the post-translational modification N-acetylalanine. Over 2 to 31 (AANYSSTSSRKEHVKVTSEPQPGFLERLSE) the chain is Nuclear. The chain crosses the membrane as a helical span at residues 32-52 (TSGGMFVGLMTFLLSFYLIFT). Residues 53 to 313 (NEGRALKTAT…NSMKTWGLRA (261 aa)) are Perinuclear space-facing. Residues 314 to 334 (AGWMAMFMGLNLMTRILYTLV) traverse the membrane as a helical segment. At 335–345 (DWFPVFRDLVN) the chain is on the nuclear side. Residues 346-366 (IGLKAFAFCVATSLTLLTVAA) traverse the membrane as a helical segment. The Perinuclear space segment spans residues 367 to 368 (GW). Residues 369-389 (LFYRPLWAALIGCLALVPIII) form a helical membrane-spanning segment. At 390-400 (ARTRVPAKKLE) the chain is on the nuclear side.

Belongs to the TMEM43 family. Can form oligomers through the transmembrane domains. Interacts with EMD; the interaction retains EMD at the inner nuclear membrane. Interacts with LMNA and LMNB2. Interacts with SUN2. Interacts with RNF26; this interaction is important to modulate innate immune signaling through the cGAS-STING pathway. Interacts with CARD10. Interacts with gap junctions proteins GJB2/Cx26 and GJB4/Cx30. Widely expressed, including in the cochlea, heart, eye, brain and kidney.

The protein localises to the endoplasmic reticulum membrane. It localises to the nucleus inner membrane. Its subcellular location is the cell membrane. Its function is as follows. May have an important role in maintaining nuclear envelope structure by organizing protein complexes at the inner nuclear membrane. Required for retaining emerin at the inner nuclear membrane. Plays a role in the modulation of innate immune signaling through the cGAS-STING pathway by interacting with RNF26. In addition, functions as a critical signaling component in mediating NF-kappa-B activation by acting downstream of EGFR and upstream of CARD10. Contributes to passive conductance current in cochlear glia-like supporting cells, mediated by gap junctions and necessary for hearing. The sequence is that of Transmembrane protein 43 (Tmem43) from Mus musculus (Mouse).